A 573-amino-acid polypeptide reads, in one-letter code: Sulfate adenylyltransferase (573 aa).

Positions 1-169 (MANSPHGGVL…IEAVNKLNHY (169 aa)) are N-terminal. Residues 170-394 (DYVALRYTPA…LRESSPPRHT (225 aa)) are catalytic. Sulfate is bound at residue Gln-197. ATP contacts are provided by residues 197 to 200 (QTRN) and 291 to 294 (GRDH). Catalysis depends on residues Thr-198, Arg-199, and Asn-200. Residue Arg-199 participates in sulfate binding. Ala-295 serves as a coordination point for sulfate. Residue Val-333 participates in ATP binding. Residues 395–573 (QGFTVFLTGY…LETEGFFDRA (179 aa)) are allosteric regulation domain; adenylyl-sulfate kinase-like. Residues 434-437 (DTVR), Arg-451, 477-478 (IA), and Arg-515 contribute to the 3'-phosphoadenylyl sulfate site.

The protein in the N-terminal section; belongs to the sulfate adenylyltransferase family. In the C-terminal section; belongs to the APS kinase family. In terms of assembly, homohexamer. Dimer of trimers.

Its subcellular location is the cytoplasm. The enzyme catalyses sulfate + ATP + H(+) = adenosine 5'-phosphosulfate + diphosphate. The protein operates within sulfur metabolism; hydrogen sulfide biosynthesis; sulfite from sulfate: step 1/3. Its activity is regulated as follows. Allosterically inhibited by 3'-phosphoadenosine 5'-phosphosulfate (PAPS). Functionally, catalyzes the first intracellular reaction of sulfate assimilation, forming adenosine-5'-phosphosulfate (APS) from inorganic sulfate and ATP. Plays an important role in sulfate activation as a component of the biosynthesis pathway of sulfur-containing amino acids. The protein is Sulfate adenylyltransferase of Aspergillus oryzae (strain ATCC 42149 / RIB 40) (Yellow koji mold).